The chain runs to 212 residues: Ependymin (212 aa).

An N-terminal signal peptide occupies residues Met1–Ala20. Asn69, Asn92, and Asn112 each carry an N-linked (GlcNAc...) asparagine glycan.

This sequence belongs to the ependymin family. Forms disulfide-linked dimers. Binds calcium through the terminal sialic acids. In terms of tissue distribution, EPDs are synthesized in the meninx and secreted in the cerebrospinal fluid.

The protein localises to the secreted. Its function is as follows. May play a role in neural plasticity. May be involved during axon regeneration. The polypeptide is Ependymin (epd) (Clupea harengus (Atlantic herring)).